A 97-amino-acid polypeptide reads, in one-letter code: Co-chaperonin GroES (97 aa).

Belongs to the GroES chaperonin family. Heptamer of 7 subunits arranged in a ring. Interacts with the chaperonin GroEL.

Its subcellular location is the cytoplasm. Together with the chaperonin GroEL, plays an essential role in assisting protein folding. The GroEL-GroES system forms a nano-cage that allows encapsulation of the non-native substrate proteins and provides a physical environment optimized to promote and accelerate protein folding. GroES binds to the apical surface of the GroEL ring, thereby capping the opening of the GroEL channel. The sequence is that of Co-chaperonin GroES from Pseudomonas aeruginosa (strain LESB58).